Here is a 260-residue protein sequence, read N- to C-terminus: HMP-PP phosphatase (260 aa).

The active-site Nucleophile is the Asp-8. Mg(2+)-binding residues include Asp-8, Asp-10, and Asp-212.

It belongs to the HAD-like hydrolase superfamily. Cof family. Mg(2+) is required as a cofactor.

The enzyme catalyses 4-amino-2-methyl-5-(diphosphooxymethyl)pyrimidine + H2O = 4-amino-2-methyl-5-(phosphooxymethyl)pyrimidine + phosphate + H(+). Its function is as follows. Catalyzes the hydrolysis of 4-amino-2-methyl-5-hydroxymethylpyrimidine pyrophosphate (HMP-PP) to 4-amino-2-methyl-5-hydroxymethylpyrimidine phosphate (HMP-P). The chain is HMP-PP phosphatase from Shigella boydii serotype 4 (strain Sb227).